The following is a 334-amino-acid chain: Biotin synthase (334 aa).

Positions 55-280 (EEIEVEGIIS…HTMLRFAGGR (226 aa)) constitute a Radical SAM core domain. Residues cysteine 70, cysteine 74, and cysteine 77 each contribute to the [4Fe-4S] cluster site. 3 residues coordinate [2Fe-2S] cluster: cysteine 113, cysteine 205, and arginine 275.

The protein belongs to the radical SAM superfamily. Biotin synthase family. In terms of assembly, homodimer. [4Fe-4S] cluster serves as cofactor. It depends on [2Fe-2S] cluster as a cofactor.

It catalyses the reaction (4R,5S)-dethiobiotin + (sulfur carrier)-SH + 2 reduced [2Fe-2S]-[ferredoxin] + 2 S-adenosyl-L-methionine = (sulfur carrier)-H + biotin + 2 5'-deoxyadenosine + 2 L-methionine + 2 oxidized [2Fe-2S]-[ferredoxin]. It participates in cofactor biosynthesis; biotin biosynthesis; biotin from 7,8-diaminononanoate: step 2/2. Its function is as follows. Catalyzes the conversion of dethiobiotin (DTB) to biotin by the insertion of a sulfur atom into dethiobiotin via a radical-based mechanism. This is Biotin synthase from Corynebacterium glutamicum (strain R).